The primary structure comprises 72 residues: Translational regulator CsrA (72 aa).

It belongs to the CsrA/RsmA family. As to quaternary structure, homodimer; the beta-strands of each monomer intercalate to form a hydrophobic core, while the alpha-helices form wings that extend away from the core.

Its subcellular location is the cytoplasm. Its function is as follows. A translational regulator that binds mRNA to regulate translation initiation and/or mRNA stability. Usually binds in the 5'-UTR at or near the Shine-Dalgarno sequence preventing ribosome-binding, thus repressing translation. Its main target seems to be the major flagellin gene, while its function is anatagonized by FliW. The sequence is that of Translational regulator CsrA from Clostridium novyi (strain NT).